We begin with the raw amino-acid sequence, 545 residues long: Methionine--tRNA ligase (545 aa).

Positions 15-25 (PYANGPIHLGH) match the 'HIGH' region motif. Residues cysteine 146, cysteine 149, cysteine 159, and cysteine 162 each coordinate Zn(2+). The 'KMSKS' region signature appears at 332–336 (KMSKS). Lysine 335 serves as a coordination point for ATP.

This sequence belongs to the class-I aminoacyl-tRNA synthetase family. MetG type 1 subfamily. As to quaternary structure, monomer. Requires Zn(2+) as cofactor.

The protein resides in the cytoplasm. The catalysed reaction is tRNA(Met) + L-methionine + ATP = L-methionyl-tRNA(Met) + AMP + diphosphate. Functionally, is required not only for elongation of protein synthesis but also for the initiation of all mRNA translation through initiator tRNA(fMet) aminoacylation. In Hamiltonella defensa subsp. Acyrthosiphon pisum (strain 5AT), this protein is Methionine--tRNA ligase.